Consider the following 445-residue polypeptide: Solute carrier family 52, riboflavin transporter, member 2 (445 aa).

6 consecutive transmembrane segments (helical) span residues 14-34, 47-67, 86-106, 112-132, 147-167, and 196-216; these read LLVA…WVEL, LPSY…VVTL, VLGM…APVA, VAFL…NVTF, FFLG…VQGV, and FFWA…GLLL. The interval 228–264 is disordered; the sequence is ELGSGLQVGAPGAEEEVEESSPLQEPPSQAAGTTPGP. Residues 247-258 show a composition bias toward low complexity; sequence SSPLQEPPSQAA. 5 consecutive transmembrane segments (helical) span residues 277-297, 312-332, 339-359, 366-386, and 404-424; these read ACLL…LPAV, LAVV…MGVL, LGGL…LAVL, VGTS…LGVF, and ALLA…VAMF.

Belongs to the riboflavin transporter family. Highly expressed in brain, fetal brain and salivary gland. Weakly expressed in other tissues.

It is found in the cell membrane. It carries out the reaction riboflavin(in) = riboflavin(out). With respect to regulation, riboflavin transport is Na(+)-independent but moderately pH-sensitive. Activity is strongly inhibited by riboflavin analogs, such as lumiflavin. Weakly inhibited by flavin adenine dinucleotide (FAD) and flavin mononucleotide (FMN). Plasma membrane transporter mediating the uptake by cells of the water soluble vitamin B2/riboflavin that plays a key role in biochemical oxidation-reduction reactions of the carbohydrate, lipid, and amino acid metabolism. Humans are unable to synthesize vitamin B2/riboflavin and must obtain it via intestinal absorption. May also act as a receptor for 4-hydroxybutyrate. In terms of biological role, (Microbial infection) In case of infection by retroviruses, acts as a cell receptor to retroviral envelopes similar to the porcine endogenous retrovirus (PERV-A). In Homo sapiens (Human), this protein is Solute carrier family 52, riboflavin transporter, member 2 (SLC52A2).